Consider the following 192-residue polypeptide: Orotate phosphoribosyltransferase (192 aa).

Residue 116 to 124 coordinates 5-phospho-alpha-D-ribose 1-diphosphate; sequence EDIVTTGLS. Orotate contacts are provided by T120 and R148.

This sequence belongs to the purine/pyrimidine phosphoribosyltransferase family. PyrE subfamily. As to quaternary structure, homodimer. Mg(2+) serves as cofactor.

It catalyses the reaction orotidine 5'-phosphate + diphosphate = orotate + 5-phospho-alpha-D-ribose 1-diphosphate. It participates in pyrimidine metabolism; UMP biosynthesis via de novo pathway; UMP from orotate: step 1/2. Functionally, catalyzes the transfer of a ribosyl phosphate group from 5-phosphoribose 1-diphosphate to orotate, leading to the formation of orotidine monophosphate (OMP). This is Orotate phosphoribosyltransferase from Bartonella tribocorum (strain CIP 105476 / IBS 506).